Reading from the N-terminus, the 129-residue chain is Virion-associated protein (129 aa).

Coiled-coil stretches lie at residues 1 to 31 (MANL…ILEM) and 38 to 59 (IKES…LIND). Residues 122-129 (PAGWPNQF) are capsid binding.

It belongs to the caulimovirus ORF III family. As to quaternary structure, homotetramer, through coiled-coil domain. Homotrimer when interacts with icosehadral capsid. Interacts with capsid protein, and with Movement protein.

It is found in the virion. Its subcellular location is the host cell junction. The protein localises to the host plasmodesma. In terms of biological role, plays a role in virus cell-to-cell and plant-to-plant transmission. Interacts with virion icosahedral capsid and movement protein, thereby facilitating virion cell-to-cell transmission through plasmodesmata opened by viral movement protein. Also interacts with aphid transmission factor, attaching the virion to aphid stylet when the animal feeds on an virus infected plant. Aphid saliva may later detach the virion, inducing release of infectious particles when the animal feeds on a new plant. In Arabidopsis thaliana (Mouse-ear cress), this protein is Virion-associated protein.